Consider the following 476-residue polypeptide: Bifunctional protein HldE (476 aa).

Residues 1-318 (MKLDLTVLEQ…YTALHGDKLA (318 aa)) form a ribokinase region. 195-198 (NLGE) contributes to the ATP binding site. D264 is a catalytic residue. A cytidylyltransferase region spans residues 344-476 (MTNGCFDILH…MIDTILDREG (133 aa)).

This sequence in the N-terminal section; belongs to the carbohydrate kinase PfkB family. It in the C-terminal section; belongs to the cytidylyltransferase family. As to quaternary structure, homodimer.

It carries out the reaction D-glycero-beta-D-manno-heptose 7-phosphate + ATP = D-glycero-beta-D-manno-heptose 1,7-bisphosphate + ADP + H(+). It catalyses the reaction D-glycero-beta-D-manno-heptose 1-phosphate + ATP + H(+) = ADP-D-glycero-beta-D-manno-heptose + diphosphate. It participates in nucleotide-sugar biosynthesis; ADP-L-glycero-beta-D-manno-heptose biosynthesis; ADP-L-glycero-beta-D-manno-heptose from D-glycero-beta-D-manno-heptose 7-phosphate: step 1/4. It functions in the pathway nucleotide-sugar biosynthesis; ADP-L-glycero-beta-D-manno-heptose biosynthesis; ADP-L-glycero-beta-D-manno-heptose from D-glycero-beta-D-manno-heptose 7-phosphate: step 3/4. Functionally, catalyzes the phosphorylation of D-glycero-D-manno-heptose 7-phosphate at the C-1 position to selectively form D-glycero-beta-D-manno-heptose-1,7-bisphosphate. Its function is as follows. Catalyzes the ADP transfer from ATP to D-glycero-beta-D-manno-heptose 1-phosphate, yielding ADP-D-glycero-beta-D-manno-heptose. This Chromohalobacter salexigens (strain ATCC BAA-138 / DSM 3043 / CIP 106854 / NCIMB 13768 / 1H11) protein is Bifunctional protein HldE.